The chain runs to 541 residues: Transcription factor STP2 (541 aa).

An i region spans residues 13–32 (VLTRIYDYLKALVQQVIVPN). The tract at residues 35–58 (DDKSSKSTPFEKLEPAKQNHPQKD) is disordered. Residues 73 to 105 (LFPKQNNKQLSLTSKSSVVPCALNLDNLETPFS) form an II region. A C2H2-type 1 zinc finger spans residues 204 to 226 (YICHYCDARFRIRGYLTRHIKKH). The C2H2-type 2; atypical zinc-finger motif lies at 232–267 (YHCPFFDNSISQELRCHTSGGFSRRDTYKTHLKSRH). The segment at 284–309 (GVCTQCGEHFSTSESWVENHIEAGSC) adopts a C2H2-type 3; atypical zinc-finger fold. Residues 452 to 462 (SSASSALSPLS) are compositionally biased toward low complexity. The interval 452–497 (SSASSALSPLSGDPITTTETNKSYPLDSEQSLLEPDKTEEDAINQS) is disordered. Polar residues predominate over residues 465-482 (PITTTETNKSYPLDSEQS).

In terms of assembly, interacts (via Region II) with SSY5; protease component of the SPS-sensor. Activated by the amino acid-induced proteolytic removal of an N-terminal inhibitory domain by serine protease SSY5, an intrinsic component of the SPS-sensor. Processing requires at least 2 components of the SCF(GRR1) ubiquitin ligase complex, namely the F-box protein GRR1 and the E2 enzyme CDC34, but does not depend on the proteasome. Processing is negatively regulated by the protein phosphatase 2A regulatory subunit RTS1.

It is found in the cell membrane. The protein resides in the nucleus. Functionally, transcription factor involved in the regulation of gene expression in response to extracellular amino acid levels. Synthesized as latent cytoplasmic precursor, which, upon a signal initiated by the plasma membrane SPS (SSY1-PTR3-SSY5) amino acid sensor system, becomes proteolytically activated and relocates to the nucleus, where it induces the expression of SPS-sensor-regulated genes, including the amino-acid permeases BAP2 and BAP3. Binding to promoters is facilitated by DAL81. Involved in the repression of genes subject to nitrogen catabolite repression and genes involved in stress response. Negatively regulated by inner nuclear membrane proteins ASI1, ASI2 and ASI3, which prevent unprocessed precursor forms that escape cytoplasmic anchoring from inducing SPS-sensor-regulated genes. This chain is Transcription factor STP2 (STP2), found in Saccharomyces cerevisiae (strain ATCC 204508 / S288c) (Baker's yeast).